Reading from the N-terminus, the 455-residue chain is MSLDIVILAAGQGTRMRSALPKVLHPVAGNSMLGHVIHSARQLSPNGIHVVIGHGADAVREQLAADDLNFVMQDKQLGTGHAVAQALPALTAETVLILYGDVPLIEVETLTRLLKLVNPQQLGLLTVTLDDPTGYGRIVRDQQNRVCAIVEHKDANDVQKAITEGNTGILAVPAKRLADWLGRLSNNNAQGEYYLTDVIAMAVNDGLIVATEQPYGAMEVQGANDRKQLSELERHYQLREARRLMAGGVTLRDPARFDVRGEVSVGRDVLIDINVILEGKVVIEDNVVIGPNCVIKDSTLRKGVIVKANSHIEGAILGEGSDAGPFARLRPGSVLGAKAHVGNFVELKNANLGEGAKVGHLTYLGDAEVGARTNIGAGTITCNYDGANKHKTTLGTDVFIGSNNSLVAPVDIFDGATTAAGSTITQNVPTEQLGVARARQRNIEGWKRPVKIRKD.

A pyrophosphorylase region spans residues 1–226; sequence MSLDIVILAA…AMEVQGANDR (226 aa). UDP-N-acetyl-alpha-D-glucosamine-binding positions include 8–11, Lys-22, Gln-73, 78–79, 99–101, Gly-136, Glu-151, Asn-166, and Asn-224; these read LAAG, GT, and YGD. Asp-101 provides a ligand contact to Mg(2+). Asn-224 contributes to the Mg(2+) binding site. The interval 227–247 is linker; it reads KQLSELERHYQLREARRLMAG. The segment at 248 to 455 is N-acetyltransferase; sequence GVTLRDPARF…WKRPVKIRKD (208 aa). 2 residues coordinate UDP-N-acetyl-alpha-D-glucosamine: Arg-330 and Lys-348. His-360 functions as the Proton acceptor in the catalytic mechanism. Residues Tyr-363 and Asn-374 each contribute to the UDP-N-acetyl-alpha-D-glucosamine site. Acetyl-CoA-binding positions include Ala-377, 383–384, Ser-402, Ala-420, and Arg-437; that span reads NY.

The protein in the N-terminal section; belongs to the N-acetylglucosamine-1-phosphate uridyltransferase family. In the C-terminal section; belongs to the transferase hexapeptide repeat family. Homotrimer. It depends on Mg(2+) as a cofactor.

It is found in the cytoplasm. It carries out the reaction alpha-D-glucosamine 1-phosphate + acetyl-CoA = N-acetyl-alpha-D-glucosamine 1-phosphate + CoA + H(+). It catalyses the reaction N-acetyl-alpha-D-glucosamine 1-phosphate + UTP + H(+) = UDP-N-acetyl-alpha-D-glucosamine + diphosphate. The protein operates within nucleotide-sugar biosynthesis; UDP-N-acetyl-alpha-D-glucosamine biosynthesis; N-acetyl-alpha-D-glucosamine 1-phosphate from alpha-D-glucosamine 6-phosphate (route II): step 2/2. It participates in nucleotide-sugar biosynthesis; UDP-N-acetyl-alpha-D-glucosamine biosynthesis; UDP-N-acetyl-alpha-D-glucosamine from N-acetyl-alpha-D-glucosamine 1-phosphate: step 1/1. Its pathway is bacterial outer membrane biogenesis; LPS lipid A biosynthesis. Functionally, catalyzes the last two sequential reactions in the de novo biosynthetic pathway for UDP-N-acetylglucosamine (UDP-GlcNAc). The C-terminal domain catalyzes the transfer of acetyl group from acetyl coenzyme A to glucosamine-1-phosphate (GlcN-1-P) to produce N-acetylglucosamine-1-phosphate (GlcNAc-1-P), which is converted into UDP-GlcNAc by the transfer of uridine 5-monophosphate (from uridine 5-triphosphate), a reaction catalyzed by the N-terminal domain. In Pseudomonas savastanoi pv. phaseolicola (strain 1448A / Race 6) (Pseudomonas syringae pv. phaseolicola (strain 1448A / Race 6)), this protein is Bifunctional protein GlmU.